Reading from the N-terminus, the 486-residue chain is Homoserine O-acetyltransferase (486 aa).

The 371-residue stretch at 66 to 436 folds into the AB hydrolase-1 domain; that stretch reads NVLVICHALT…PEGHDAFLLE (371 aa). The Nucleophile role is filled by serine 162. The disordered stretch occupies residues 248–281; that stretch reads KFSRRSPSIAQQQKAQREETRKPSTVSEHSLQIH. Composition is skewed to polar residues over residues 250 to 261 and 270 to 280; these read SRRSPSIAQQQK and PSTVSEHSLQI. Catalysis depends on residues aspartate 401 and histidine 430.

Belongs to the AB hydrolase superfamily. MetX family.

The protein resides in the cytoplasm. The enzyme catalyses L-homoserine + acetyl-CoA = O-acetyl-L-homoserine + CoA. It functions in the pathway amino-acid biosynthesis; L-methionine biosynthesis via de novo pathway; O-acetyl-L-homoserine from L-homoserine: step 1/1. In terms of biological role, commits homoserine to the methionine biosynthesis pathway by catalyzing its O-acetylation. This Saccharomyces cerevisiae (strain ATCC 204508 / S288c) (Baker's yeast) protein is Homoserine O-acetyltransferase (MET2).